Consider the following 147-residue polypeptide: Large ribosomal subunit protein uL13 (147 aa).

Belongs to the universal ribosomal protein uL13 family. In terms of assembly, part of the 50S ribosomal subunit.

Its function is as follows. This protein is one of the early assembly proteins of the 50S ribosomal subunit, although it is not seen to bind rRNA by itself. It is important during the early stages of 50S assembly. This is Large ribosomal subunit protein uL13 from Lactiplantibacillus plantarum (strain ATCC BAA-793 / NCIMB 8826 / WCFS1) (Lactobacillus plantarum).